A 749-amino-acid chain; its full sequence is Probable galactinol--sucrose galactosyltransferase 6 (749 aa).

This sequence belongs to the glycosyl hydrolases 36 family.

The enzyme catalyses alpha-D-galactosyl-(1-&gt;3)-1D-myo-inositol + sucrose = raffinose + myo-inositol. In terms of biological role, transglycosidase operating by a ping-pong reaction mechanism. Involved in the synthesis of raffinose, a major soluble carbohydrate in seeds, roots and tubers. The chain is Probable galactinol--sucrose galactosyltransferase 6 (RFS6) from Arabidopsis thaliana (Mouse-ear cress).